The primary structure comprises 74 residues: NADH dehydrogenase [ubiquinone] 1 alpha subcomplex assembly factor 8 (74 aa).

The CHCH domain occupies 22-69 (LAACGAEASAYGKCVQASTAPGGRLSKDLCVREFEALRSCFAAAAKKT). Short sequence motifs (cx9C motif) lie at residues 25 to 35 (CGAEASAYGKC) and 51 to 61 (CVREFEALRSC). Intrachain disulfides connect Cys25-Cys61 and Cys35-Cys51.

In terms of assembly, interacts with NDUFAF5.

It localises to the mitochondrion. Its function is as follows. Involved in the assembly of mitochondrial NADH:ubiquinone oxidoreductase complex (complex I, MT-ND1). Required to stabilize NDUFAF5. In Mus musculus (Mouse), this protein is NADH dehydrogenase [ubiquinone] 1 alpha subcomplex assembly factor 8.